Here is a 142-residue protein sequence, read N- to C-terminus: Anti-sigma F factor (142 aa).

It belongs to the anti-sigma-factor family.

It catalyses the reaction L-seryl-[protein] + ATP = O-phospho-L-seryl-[protein] + ADP + H(+). It carries out the reaction L-threonyl-[protein] + ATP = O-phospho-L-threonyl-[protein] + ADP + H(+). In terms of biological role, binds to sigma F and blocks its ability to form an RNA polymerase holoenzyme (E-sigma F). Phosphorylates SpoIIAA on a serine residue. This phosphorylation may enable SpoIIAA to act as an anti-anti-sigma factor that counteracts SpoIIAB and thus releases sigma F from inhibition. The sequence is that of Anti-sigma F factor from Clostridium kluyveri (strain NBRC 12016).